We begin with the raw amino-acid sequence, 507 residues long: Phosphoprotein (507 aa).

Polar residues predominate over residues 31–51 (EVSSLRDQTCNPGQENGTTGM). Disordered stretches follow at residues 31–86 (EVSS…CGER), 123–172 (IEDA…GYSF), and 242–307 (GIVA…DSEY). Positions 147 to 160 (SLDDSTEDSGEDYS) are enriched in acidic residues. Ser-151 carries the post-translational modification Phosphoserine. Polar residues-rich tracts occupy residues 246-271 (GSTSGATQSALKSTGGSSEPSVSAGN) and 289-300 (SGTQLPPRTSNE). A multimerization region spans residues 304–376 (DSEYDDELFS…LSSIMIAIPG (73 aa)). Positions 310–339 (ELFSEIQEIRSAITKLTEDNQAILTKLDTL) form a coiled coil. The interval 459–507 (PSKAVLASLIRSSRVDQSHKHNMLALLKNIKGDDNLNEFYQMVKSITHA) is interaction with the nucleocapsid (N-RNA).

This sequence belongs to the morbillivirus P protein family. In terms of assembly, homotetramer. Interacts (via multimerization domain) with polymerase L; this interaction forms the polymerase L-P complex. Interacts (via N-terminus) with N0 (via Ncore); this interaction allows P to chaperon N0 to avoid N polymerization before encapsidation. Interacts (via C-terminus) with N-RNA template; this interaction positions the polymerase on the template for both transcription and replication. Phosphorylation on serines by host CK2 is necessary for the formation of viral factories.

Its function is as follows. Essential cofactor of the RNA polymerase L that plays a central role in the transcription and replication by forming the polymerase complex with RNA polymerase L and recruiting L to the genomic N-RNA template for RNA synthesis. Also plays a central role in the encapsidation of nascent RNA chains by forming the encapsidation complex with the nucleocapsid protein N (N-P complex). Acts as a chaperone for newly synthesized free N protein, so-called N0, allowing encapsidation of nascent RNA chains during replication. The nucleoprotein protein N prevents excessive phosphorylation of P, which leads to down-regulation of viral transcription/ replication. Participates, together with N, in the formation of viral factories (viroplasms), which are large inclusions in the host cytoplasm where replication takes place. This Canine distemper virus (strain Onderstepoort) (CDV) protein is Phosphoprotein (P/V).